We begin with the raw amino-acid sequence, 907 residues long: Sensor protein GacS (907 aa).

A run of 3 helical transmembrane segments spans residues 9 to 25 (ASLM…WMQL), 84 to 101 (VLAH…IGSG), and 159 to 178 (LFAS…TLAV). The HAMP domain occupies 182–234 (RTINGPMSQIKQAVSQLKDGNLETRLPPLGSRELDELASGINRMAATLQNAQE). The region spanning 281–502 (NMSHEIRTPL…EFWISLKLPK (222 aa)) is the Histidine kinase domain. Position 284 is a phosphohistidine; by autocatalysis (His-284). Residues 658 to 777 (RVLCVDDNPA…QLAQVVLKWT (120 aa)) enclose the Response regulatory domain. 4-aspartylphosphate is present on Asp-707. In terms of domain architecture, HPt spans 814–907 (KADLAADMLA…RLEAEARVMA (94 aa)). At His-853 the chain carries Phosphohistidine.

In terms of processing, activation requires a sequential transfer of a phosphate group from a His in the primary transmitter domain, to an Asp in the receiver domain and to a His in the secondary transmitter domain.

The protein localises to the cell inner membrane. The catalysed reaction is ATP + protein L-histidine = ADP + protein N-phospho-L-histidine.. In terms of biological role, forms part of a two-component regulatory system GacA/GacS(LemA). May be involved in lesion formation, swarming and in the production of extracellular protease, syringomycin and N-acyl-L-homoserine lactone (acyl-HSL). Required for pathogenicity on bean. This is Sensor protein GacS (gacS) from Pseudomonas syringae pv. syringae.